The chain runs to 305 residues: Methionyl-tRNA formyltransferase (305 aa).

111–114 contacts (6S)-5,6,7,8-tetrahydrofolate; it reads SLLP.

The protein belongs to the Fmt family.

The catalysed reaction is L-methionyl-tRNA(fMet) + (6R)-10-formyltetrahydrofolate = N-formyl-L-methionyl-tRNA(fMet) + (6S)-5,6,7,8-tetrahydrofolate + H(+). Attaches a formyl group to the free amino group of methionyl-tRNA(fMet). The formyl group appears to play a dual role in the initiator identity of N-formylmethionyl-tRNA by promoting its recognition by IF2 and preventing the misappropriation of this tRNA by the elongation apparatus. This Helicobacter pylori (strain J99 / ATCC 700824) (Campylobacter pylori J99) protein is Methionyl-tRNA formyltransferase.